Consider the following 144-residue polypeptide: Cell division protein SepF (144 aa).

The tract at residues D16–R42 is disordered.

It belongs to the SepF family. Homodimer. Interacts with FtsZ.

Its subcellular location is the cytoplasm. In terms of biological role, cell division protein that is part of the divisome complex and is recruited early to the Z-ring. Probably stimulates Z-ring formation, perhaps through the cross-linking of FtsZ protofilaments. Its function overlaps with FtsA. The polypeptide is Cell division protein SepF (Lactobacillus gasseri (strain ATCC 33323 / DSM 20243 / BCRC 14619 / CIP 102991 / JCM 1131 / KCTC 3163 / NCIMB 11718 / NCTC 13722 / AM63)).